Here is a 664-residue protein sequence, read N- to C-terminus: MAPTTPLLELVDVHRTYPVGESTVNALRGVSLEIREGEFVAIMGSSGSGKSSLLHILGLLDNPDRGEYRILGRNVNALPEDGQAGLRNHVAGFVFQQFHLLKRMSIVDNVRLPHIYSGLKGDFRHEALESLKKVGLMHRLDHTPGQLSGGEQQRVAIARALIGNPMILFADEPTGNLDSRNSLEIMKILEELHREGRTIVMVTHEDEIAAYADRVITMRDGLVVSDQRRDRVCLPAGPSVPLTLDPHAMMDASRNLSVWQDGRFIGFVQQAFQSIFANKVRSLLSVLGILVGVASVIAMMALGEGAKVSIEEELKSMGSNLISVRGGSARVRGAAQGDGAVARFTFKDVKDISRMHSLVKGAAGTVNGSGQIVFGNRNWSTTLDGVGYEYGSMRAFVPSIGRWFTRDEIRKREKVAVIGVTVARELFGNNNPIGHTVKINRINFKVIGIAPAKGFSTHRDQDDVVLVPVTTAMYRVLGRDYLNSIYVEVRSAEGIDGAKEAVSDLIVKNHRLREGDDSFNIRDMTEIQEMLSSTTRTMSMLLGAIAAISLLVGGIGIMNIMLVSVTERTREIGLRKAIGARREDIMLQFLVESVGLTLSGGIIGIIAGIGISALLAVFAGWAVKTSIVSIVLATFFSAITGIFFGLWPARKAAELRPVEALRYE.

An ABC transporter domain is found at 8 to 245 (LELVDVHRTY…AGPSVPLTLD (238 aa)). 44–51 (GSSGSGKS) is a binding site for ATP. 4 helical membrane passes run 283–303 (LLSV…MALG), 543–563 (GAIA…IMLV), 602–622 (IIGI…AGWA), and 627–647 (IVSI…FGLW).

It belongs to the ABC transporter superfamily. Macrolide exporter (TC 3.A.1.122) family. As to quaternary structure, homodimer.

The protein localises to the cell inner membrane. In terms of biological role, non-canonical ABC transporter that contains transmembrane domains (TMD), which form a pore in the inner membrane, and an ATP-binding domain (NBD), which is responsible for energy generation. Confers resistance against macrolides. In Chlorobium luteolum (strain DSM 273 / BCRC 81028 / 2530) (Pelodictyon luteolum), this protein is Macrolide export ATP-binding/permease protein MacB.